A 512-amino-acid polypeptide reads, in one-letter code: Kelch repeat protein C2 (512 aa).

The 66-residue stretch at 2-67 folds into the BTB domain; that stretch reads ESVIFSINGE…MRWKKINITV (66 aa). The 75-residue stretch at 102 to 176 folds into the BACK domain; sequence CIRMFNFSKR…LLKWIHKNPN (75 aa). Kelch repeat units lie at residues 216 to 261, 262 to 307, 309 to 354, 356 to 403, 405 to 449, and 452 to 498; these read IKHN…LYNC, LYII…VNDG, LYVI…FVND, IYVM…EYDG, IYAI…SCGD, and LIIA…THKS.

Belongs to the poxviruses Kelch family.

The protein is Kelch repeat protein C2 of Camelus.